The chain runs to 276 residues: 2,3,4,5-tetrahydropyridine-2,6-dicarboxylate N-succinyltransferase (276 aa).

Substrate-binding residues include Arg-104 and Asp-141.

The protein belongs to the transferase hexapeptide repeat family. Homotrimer.

It is found in the cytoplasm. The enzyme catalyses (S)-2,3,4,5-tetrahydrodipicolinate + succinyl-CoA + H2O = (S)-2-succinylamino-6-oxoheptanedioate + CoA. It functions in the pathway amino-acid biosynthesis; L-lysine biosynthesis via DAP pathway; LL-2,6-diaminopimelate from (S)-tetrahydrodipicolinate (succinylase route): step 1/3. The protein is 2,3,4,5-tetrahydropyridine-2,6-dicarboxylate N-succinyltransferase of Legionella pneumophila (strain Paris).